The following is a 213-amino-acid chain: Nucleolar protein 12 (213 aa).

The stretch at 33–96 (GFHKRKVERK…RLVTAKTESV (64 aa)) forms a coiled coil. A disordered region spans residues 118–213 (ARLLGLTPPE…LTGKARHSGE (96 aa)). 2 stretches are compositionally biased toward basic residues: residues 170 to 182 (AHSR…KHPR) and 198 to 213 (KAQR…HSGE).

The protein belongs to the RRP17 family. Interacts with KIAA1191.

The protein localises to the nucleus. It is found in the nucleolus. The protein resides in the cytoplasm. Its function is as follows. Multifunctional RNA binding protein that plays a role in RNA metabolism and DNA maintenance. Participates in the resolution of DNA stress and the maintenance of genome integrity by localizing to sites of DNA insults. Also plays a role in proper nucleolar organization by limiting nucleolar size and regulating nucleolar number. Mechanistically, regulates the nucleolar levels of fibrillarin and nucleolin, two key players in pre-rRNA processing and ribosome assembly. The chain is Nucleolar protein 12 (NOL12) from Homo sapiens (Human).